We begin with the raw amino-acid sequence, 156 residues long: Small ribosomal subunit protein uS7 (156 aa).

It belongs to the universal ribosomal protein uS7 family. In terms of assembly, part of the 30S ribosomal subunit. Contacts proteins S9 and S11.

In terms of biological role, one of the primary rRNA binding proteins, it binds directly to 16S rRNA where it nucleates assembly of the head domain of the 30S subunit. Is located at the subunit interface close to the decoding center, probably blocks exit of the E-site tRNA. The polypeptide is Small ribosomal subunit protein uS7 (Shigella dysenteriae serotype 1 (strain Sd197)).